A 259-amino-acid polypeptide reads, in one-letter code: UPF0246 protein PSPPH_1119 (259 aa).

It belongs to the UPF0246 family.

In Pseudomonas savastanoi pv. phaseolicola (strain 1448A / Race 6) (Pseudomonas syringae pv. phaseolicola (strain 1448A / Race 6)), this protein is UPF0246 protein PSPPH_1119.